The following is a 192-amino-acid chain: Ribosome maturation factor RimP (192 aa).

It belongs to the RimP family.

It localises to the cytoplasm. In terms of biological role, required for maturation of 30S ribosomal subunits. This is Ribosome maturation factor RimP from Mycobacterium sp. (strain JLS).